A 57-amino-acid polypeptide reads, in one-letter code: Large ribosomal subunit protein bL32 (57 aa).

Basic residues predominate over residues 1–20 (MAVPKRRMSRSNTRSRRAQW). The interval 1-22 (MAVPKRRMSRSNTRSRRAQWKA) is disordered.

Belongs to the bacterial ribosomal protein bL32 family.

The sequence is that of Large ribosomal subunit protein bL32 from Mycobacterium sp. (strain JLS).